The following is a 90-amino-acid chain: Movement protein (90 aa).

A helical membrane pass occupies residues 32-52; it reads FVFVTFGLLIAVGVAWLAYTL.

The protein belongs to the mastrevirus movement protein family. In terms of assembly, interacts with the capsid protein (CP). Part of a MP-CP-viral DNA complex.

The protein resides in the host membrane. In terms of biological role, involved in the viral transport within, and between cells. The polypeptide is Movement protein (Wheat dwarf virus (isolate Sweden) (WDV)).